The chain runs to 687 residues: DNA-directed RNA polymerase subunit beta' (687 aa).

Positions 69, 71, 87, and 90 each coordinate Zn(2+). 3 residues coordinate Mg(2+): D495, D497, and D499.

It belongs to the RNA polymerase beta' chain family. RpoC1 subfamily. As to quaternary structure, in plastids the minimal PEP RNA polymerase catalytic core is composed of four subunits: alpha, beta, beta', and beta''. When a (nuclear-encoded) sigma factor is associated with the core the holoenzyme is formed, which can initiate transcription. The cofactor is Mg(2+). Zn(2+) is required as a cofactor.

Its subcellular location is the plastid. The protein resides in the chloroplast. The catalysed reaction is RNA(n) + a ribonucleoside 5'-triphosphate = RNA(n+1) + diphosphate. DNA-dependent RNA polymerase catalyzes the transcription of DNA into RNA using the four ribonucleoside triphosphates as substrates. The chain is DNA-directed RNA polymerase subunit beta' from Solanum tuberosum (Potato).